Consider the following 927-residue polypeptide: DNA polymerase alpha-binding protein (927 aa).

4 WD repeats span residues 10–49 (FDFGGKTLVSLAPDNNTLCVANKNGLTKILKTNNPEEEPE), 134–173 (KIDEQVSQISYNSQMNILAVSMINGKVQIFSLTSTIPNKV), 227–266 (AANRICTRVAWHPKGLHFALPCADDTVKIFSIKGYSLQKT), and 273–313 (STKA…IHYT). Ser-377, Ser-379, and Ser-398 each carry phosphoserine. Residues Thr-401 and Thr-411 each carry the phosphothreonine modification. Ser-463 is modified (phosphoserine). A WD 5 repeat occupies 699 to 739 (GSDNTLLLLSKWRSPEESKWLPILDSNMEIWKMSGGKETTD).

The protein localises to the nucleus. Its function is as follows. Accessory factor for DNA replication. It plays a role in accurately duplicating the genome in vivo. This is DNA polymerase alpha-binding protein (CTF4) from Saccharomyces cerevisiae (strain ATCC 204508 / S288c) (Baker's yeast).